A 205-amino-acid chain; its full sequence is Large ribosomal subunit protein uL3 (205 aa).

Residues 126–150 (GGPKTHGQSDRHRAPGSIGSTTTPG) form a disordered region.

This sequence belongs to the universal ribosomal protein uL3 family. In terms of assembly, part of the 50S ribosomal subunit. Forms a cluster with proteins L14 and L19.

In terms of biological role, one of the primary rRNA binding proteins, it binds directly near the 3'-end of the 23S rRNA, where it nucleates assembly of the 50S subunit. The chain is Large ribosomal subunit protein uL3 from Dehalococcoides mccartyi (strain ATCC BAA-2100 / JCM 16839 / KCTC 5957 / BAV1).